Consider the following 602-residue polypeptide: RecBCD enzyme subunit RecD (602 aa).

171–178 (GGPGTGKT) is an ATP binding site.

The protein belongs to the RecD family. Heterotrimer of RecB, RecC and RecD. All subunits contribute to DNA-binding.

It catalyses the reaction Couples ATP hydrolysis with the unwinding of duplex DNA at the replication fork by translocating in the 5'-3' direction. This creates two antiparallel DNA single strands (ssDNA). The leading ssDNA polymer is the template for DNA polymerase III holoenzyme which synthesizes a continuous strand.. The enzyme catalyses ATP + H2O = ADP + phosphate + H(+). A helicase/nuclease that prepares dsDNA breaks (DSB) for recombinational DNA repair. Binds to DSBs and unwinds DNA via a highly rapid and processive ATP-dependent bidirectional helicase activity. Unwinds dsDNA until it encounters a Chi (crossover hotspot instigator) sequence from the 3' direction. Cuts ssDNA a few nucleotides 3' to the Chi site. The properties and activities of the enzyme are changed at Chi. The Chi-altered holoenzyme produces a long 3'-ssDNA overhang and facilitates RecA-binding to the ssDNA for homologous DNA recombination and repair. Holoenzyme degrades any linearized DNA that is unable to undergo homologous recombination. In the holoenzyme this subunit has ssDNA-dependent ATPase and 5'-3' helicase activity. When added to pre-assembled RecBC greatly stimulates nuclease activity and augments holoenzyme processivity. Negatively regulates the RecA-loading ability of RecBCD. This chain is RecBCD enzyme subunit RecD, found in Buchnera aphidicola subsp. Acyrthosiphon pisum (strain APS) (Acyrthosiphon pisum symbiotic bacterium).